The following is a 102-amino-acid chain: Large ribosomal subunit protein bL21 (102 aa).

The protein belongs to the bacterial ribosomal protein bL21 family. Part of the 50S ribosomal subunit. Contacts protein L20.

Functionally, this protein binds to 23S rRNA in the presence of protein L20. This chain is Large ribosomal subunit protein bL21, found in Nitratidesulfovibrio vulgaris (strain DSM 19637 / Miyazaki F) (Desulfovibrio vulgaris).